The chain runs to 340 residues: Protein S-acyltransferase 10 (340 aa).

The next 2 helical transmembrane spans lie at 34 to 54 (LLLK…LFLF) and 66 to 86 (PWYM…YFVT). The region spanning 162 to 212 (LTCGYCHVEQPPRTKHCHDCDRCVLQFDHHCVWLGTCIGQKNHSKFWWYIC) is the DHHC domain. Catalysis depends on Cys-192, which acts as the S-palmitoyl cysteine intermediate. The next 2 membrane-spanning stretches (helical) occupy residues 207 to 227 (FWWY…MYVD) and 241 to 261 (IIIL…LLLI).

The protein belongs to the DHHC palmitoyltransferase family. Expressed in mature embryos, embryo sacs, cotyledons, whole seedlings, hydathodes, guard cells, sites of lateral root initiation, root tips and phloem, but not in xylem.

The protein resides in the vacuole membrane. It catalyses the reaction L-cysteinyl-[protein] + hexadecanoyl-CoA = S-hexadecanoyl-L-cysteinyl-[protein] + CoA. In terms of biological role, S-acyltransferase involved in protein lipid modification. Catalyzes the palmitoylation of proteins peripheral or integral to the tonoplast. Required for the tonoplast localization of CBL2, CBL3 and CBL6, but not for the plasma membrane localization of CBL9, for the endosome localization of RABF1 or for the endomembrane localization of RABF2B. This is Protein S-acyltransferase 10 (PAT10) from Arabidopsis thaliana (Mouse-ear cress).